The following is a 124-amino-acid chain: NADH-quinone oxidoreductase subunit A (124 aa).

The next 3 helical transmembrane spans lie at 11-31 (YLPI…IMIL), 68-88 (LVAI…PWAI), and 93-113 (IGKI…IGFV).

Belongs to the complex I subunit 3 family. In terms of assembly, NDH-1 is composed of 14 different subunits. Subunits NuoA, H, J, K, L, M, N constitute the membrane sector of the complex.

Its subcellular location is the cell inner membrane. The catalysed reaction is a quinone + NADH + 5 H(+)(in) = a quinol + NAD(+) + 4 H(+)(out). Its function is as follows. NDH-1 shuttles electrons from NADH, via FMN and iron-sulfur (Fe-S) centers, to quinones in the respiratory chain. The immediate electron acceptor for the enzyme in this species is believed to be ubiquinone. Couples the redox reaction to proton translocation (for every two electrons transferred, four hydrogen ions are translocated across the cytoplasmic membrane), and thus conserves the redox energy in a proton gradient. This is NADH-quinone oxidoreductase subunit A from Rickettsia bellii (strain RML369-C).